The chain runs to 182 residues: Bifunctional protein PyrR (182 aa).

The short motif at 97–109 is the PRPP-binding element; the sequence is VVLVDDVIFRGRT.

It belongs to the purine/pyrimidine phosphoribosyltransferase family. PyrR subfamily.

It carries out the reaction UMP + diphosphate = 5-phospho-alpha-D-ribose 1-diphosphate + uracil. Functionally, regulates the transcription of the pyrimidine nucleotide (pyr) operon in response to exogenous pyrimidines. Its function is as follows. Also displays a weak uracil phosphoribosyltransferase activity which is not physiologically significant. This is Bifunctional protein PyrR from Synechococcus sp. (strain JA-2-3B'a(2-13)) (Cyanobacteria bacterium Yellowstone B-Prime).